Consider the following 582-residue polypeptide: Heterogeneous nuclear ribonucleoprotein C homolog (582 aa).

The tract at residues 1–21 (MSEALETGDPSPPPPIVSENG) is disordered. 3 C2H2-type zinc fingers span residues 102–125 (YYCC…RGYH), 130–154 (SSCD…RRTH), and 213–235 (YACL…VEMH).

It is found in the nucleus. The chain is Heterogeneous nuclear ribonucleoprotein C homolog from Caenorhabditis elegans.